Consider the following 401-residue polypeptide: Ascaroside receptor GPR3 (401 aa).

Residues 1–16 are Extracellular-facing; it reads MQPFGDAWSQRHLAGV. Residues 17–37 traverse the membrane as a helical segment; it reads VLAGSVLSIVGSLYMILGFFF. Residues 38-47 lie on the Cytoplasmic side of the membrane; it reads LRECRSFRHK. Residues 48–68 traverse the membrane as a helical segment; the sequence is LILGLAVSDLLLALNFFIPSL. Residues 69 to 93 are Extracellular-facing; it reads SMVTGREISSPWNEGFCSANGFLMQ. A disulfide bridge links Cys-85 with Cys-159. A helical membrane pass occupies residues 94 to 114; sequence LFFAQIDVWQISIALITLLML. The Cytoplasmic portion of the chain corresponds to 115 to 128; it reads SGPSMVLKWIRENV. A helical transmembrane segment spans residues 129 to 149; sequence WAVWLFPWLVSLIAAFFAFGF. Residues 150–175 are Extracellular-facing; the sequence is WDYANVGGFCWLGSRNIRLYFNYIPR. A helical transmembrane segment spans residues 176 to 196; that stretch reads WIIILVCLVIYIAVYRLILHA. The Cytoplasmic portion of the chain corresponds to 197 to 294; that stretch reads RRRANIQKTY…QKQVRKIAIQ (98 aa). The tract at residues 206-259 is disordered; sequence YRGRASDRAPPQPVTTTAPATNPESEKVNPDEISSGNGSSSLDTSRSGSSTGFT. The span at 239–257 shows a compositional bias: low complexity; the sequence is SSGNGSSSLDTSRSGSSTG. The chain crosses the membrane as a helical span at residues 295 to 315; it reads MISYPLAYAVLWAIPTIVMII. Residues 316-321 lie on the Extracellular side of the membrane; it reads QVARGG. Residues 322-342 traverse the membrane as a helical segment; the sequence is EGVSIHVEGLAKMLLVFNGFV. The Cytoplasmic segment spans residues 343–401; that stretch reads DAHVYGFNERTAMGWRQRIRPAAQEDDEEAAGTSGGVHEVVSRPEPTLKNPNVWQQNMV. Residues 362 to 401 form a disordered region; it reads RPAAQEDDEEAAGTSGGVHEVVSRPEPTLKNPNVWQQNMV. The segment covering 391–401 has biased composition (polar residues); sequence KNPNVWQQNMV.

It belongs to the G-protein coupled receptor 1 family. As to quaternary structure, interacts with ascaroside receptor GPR2; may form a functional heterodimer. Interacts with guanine nucleotide-binding protein alpha GPA2; to activate adenylate cyclase and positively regulate nematode trap formation.

It localises to the cell membrane. Functionally, g protein-coupled receptor that senses nematode ascaroside pheromones and signals via adenylate cyclase to positively regulate trap formation for nematode capture. The protein is Ascaroside receptor GPR3 of Arthrobotrys oligospora (strain ATCC 24927 / CBS 115.81 / DSM 1491) (Nematode-trapping fungus).